A 630-amino-acid chain; its full sequence is Biosynthetic arginine decarboxylase (630 aa).

Lys-99 is subject to N6-(pyridoxal phosphate)lysine. 281–291 (VDIGGGLGVDY) is a substrate binding site.

This sequence belongs to the Orn/Lys/Arg decarboxylase class-II family. SpeA subfamily. It depends on Mg(2+) as a cofactor. Pyridoxal 5'-phosphate serves as cofactor.

It carries out the reaction L-arginine + H(+) = agmatine + CO2. Catalyzes the biosynthesis of agmatine from arginine. The sequence is that of Biosynthetic arginine decarboxylase from Bacteroides thetaiotaomicron (strain ATCC 29148 / DSM 2079 / JCM 5827 / CCUG 10774 / NCTC 10582 / VPI-5482 / E50).